Reading from the N-terminus, the 215-residue chain is 3-dehydroquinate dehydratase (215 aa).

3-dehydroquinate is bound by residues Ser6, 31–33, and Arg64; that span reads ELR. The active-site Proton donor/acceptor is the His111. Residue Lys138 is the Schiff-base intermediate with substrate of the active site. 3-dehydroquinate is bound by residues Arg174, Thr193, and Gln197.

It belongs to the type-I 3-dehydroquinase family. Homodimer.

It catalyses the reaction 3-dehydroquinate = 3-dehydroshikimate + H2O. It participates in metabolic intermediate biosynthesis; chorismate biosynthesis; chorismate from D-erythrose 4-phosphate and phosphoenolpyruvate: step 3/7. Involved in the third step of the chorismate pathway, which leads to the biosynthesis of aromatic amino acids. Catalyzes the cis-dehydration of 3-dehydroquinate (DHQ) and introduces the first double bond of the aromatic ring to yield 3-dehydroshikimate. This is 3-dehydroquinate dehydratase from Ignicoccus hospitalis (strain KIN4/I / DSM 18386 / JCM 14125).